Consider the following 433-residue polypeptide: Amino-acid acetyltransferase (433 aa).

Positions 287–426 (ELVREAAIED…ASLYNYQRNS (140 aa)) constitute an N-acetyltransferase domain.

This sequence belongs to the acetyltransferase family. ArgA subfamily.

Its subcellular location is the cytoplasm. It catalyses the reaction L-glutamate + acetyl-CoA = N-acetyl-L-glutamate + CoA + H(+). The protein operates within amino-acid biosynthesis; L-arginine biosynthesis; N(2)-acetyl-L-ornithine from L-glutamate: step 1/4. The chain is Amino-acid acetyltransferase from Pseudomonas fluorescens (strain SBW25).